A 449-amino-acid chain; its full sequence is MAEETEKKYITNEDLKKHNKSGDLWIAIQGKVYNVSDWIKTHPGGDTVILNLVGQDVTDAFIAFHPGTAWHHLDHLFTGYHIRDFQVSEVSRDYRRMAAEFRKLGLFENKGHVTLYTLAFVAAMFLGVLYGVLACTSVFAHQIAAALLGLLWIQSAYIGHDSGHYVIMSNKSYNRFAQLLSGNCLTGISIAWWKWTHNAHHLACNSLDYDPDLQHIPVFAVSTKFFSSLTSRFYDRKLTFDPVARFLVSYQHFTYYPVMCFGRINLFIQTFLLLFSKREVPDRALNFAGILVFWTWFPLLVSCLPNWPERFFFVFTSFTVTALQHIQFTLNHFAADVYVGPPTGSDWFEKQAAGTIDISCRSYMDWFFGGLQFQLEHHLFPRLPRCHLRKVSPVVQELCKKHNLPYRSMSWFEANVLTINTLKTAAYQARDVANPVVKNLVWEALNTHG.

Residues 7 to 91 (KKYITNEDLK…IRDFQVSEVS (85 aa)) enclose the Cytochrome b5 heme-binding domain. Heme contacts are provided by histidine 42 and histidine 65. 2 helical membrane-spanning segments follow: residues 113 to 133 (VTLYTLAFVAAMFLGVLYGVL) and 138 to 158 (VFAHQIAAALLGLLWIQSAYI). Residues 160–164 (HDSGH) carry the Histidine box-1 motif. Residues 173-195 (YNRFAQLLSGNCLTGISIAWWKW) traverse the membrane as a helical segment. A Histidine box-2 motif is present at residues 197–201 (HNAHH). 3 helical membrane-spanning segments follow: residues 255 to 275 (YYPVMCFGRINLFIQTFLLLF), 284 to 304 (ALNFAGILVFWTWFPLLVSCL), and 311 to 331 (FFFVFTSFTVTALQHIQFTLN). The Histidine box-3 signature appears at 374-378 (QLEHH).

This sequence belongs to the fatty acid desaturase type 1 family. Fe cation is required as a cofactor. Highly expressed in flowers. Expressed in roots, leaves, stems and siliques.

It localises to the endoplasmic reticulum membrane. The catalysed reaction is an N-acyl-(4R)-4-hydroxysphinganine + 2 Fe(II)-[cytochrome b5] + O2 + 2 H(+) = a (4R,8E)-4-hydroxysphingenine ceramide + 2 Fe(III)-[cytochrome b5] + 2 H2O. The enzyme catalyses an N-acyl-(4R)-4-hydroxysphinganine + 2 Fe(II)-[cytochrome b5] + O2 + 2 H(+) = a (4R,8Z)-4-hydroxysphing-8-enine ceramide + 2 Fe(III)-[cytochrome b5] + 2 H2O. Plays a major role as delta(8)-fatty-acid desaturase which introduces a double bond at the 8-position in the long-chain base (LCB) of ceramides with or without a hydroxy group at the 4-position. The enzyme produces both the 8E and 8Z isomers (in a 4:1 ratio). This structural modification contributes to the quantitative partitioning of ceramides between the two major sphingolipid classes, glucosylceramides and glycosylinositolphosphoryl ceramides. Sphingolipids are important membrane components involved in environmental stress responses, such as resistance to chilling, and act as cell signaling molecules. The chain is Delta(8)-fatty-acid desaturase 1 (SLD1) from Arabidopsis thaliana (Mouse-ear cress).